We begin with the raw amino-acid sequence, 492 residues long: Phosphoenolpyruvate carboxylase (492 aa).

Belongs to the PEPCase type 2 family. In terms of assembly, homotetramer. It depends on Mg(2+) as a cofactor.

The catalysed reaction is oxaloacetate + phosphate = phosphoenolpyruvate + hydrogencarbonate. Functionally, catalyzes the irreversible beta-carboxylation of phosphoenolpyruvate (PEP) to form oxaloacetate (OAA), a four-carbon dicarboxylic acid source for the tricarboxylic acid cycle. This chain is Phosphoenolpyruvate carboxylase, found in Halobacterium salinarum (strain ATCC 29341 / DSM 671 / R1).